The primary structure comprises 145 residues: UPF0260 protein VC_1058 (145 aa).

This sequence belongs to the UPF0260 family.

The polypeptide is UPF0260 protein VC_1058 (Vibrio cholerae serotype O1 (strain ATCC 39315 / El Tor Inaba N16961)).